Consider the following 378-residue polypeptide: Dual-specificity RNA methyltransferase RlmN (378 aa).

Glutamate 96 functions as the Proton acceptor in the catalytic mechanism. The 239-residue stretch at 102–340 (DNGRGTLCVS…ATVRTTRGDD (239 aa)) folds into the Radical SAM core domain. The cysteines at positions 109 and 345 are disulfide-linked. Residues cysteine 116, cysteine 120, and cysteine 123 each coordinate [4Fe-4S] cluster. S-adenosyl-L-methionine-binding positions include 170–171 (GE), serine 202, 224–226 (SLH), and asparagine 302. Cysteine 345 functions as the S-methylcysteine intermediate in the catalytic mechanism.

This sequence belongs to the radical SAM superfamily. RlmN family. [4Fe-4S] cluster is required as a cofactor.

It localises to the cytoplasm. The catalysed reaction is adenosine(2503) in 23S rRNA + 2 reduced [2Fe-2S]-[ferredoxin] + 2 S-adenosyl-L-methionine = 2-methyladenosine(2503) in 23S rRNA + 5'-deoxyadenosine + L-methionine + 2 oxidized [2Fe-2S]-[ferredoxin] + S-adenosyl-L-homocysteine. It catalyses the reaction adenosine(37) in tRNA + 2 reduced [2Fe-2S]-[ferredoxin] + 2 S-adenosyl-L-methionine = 2-methyladenosine(37) in tRNA + 5'-deoxyadenosine + L-methionine + 2 oxidized [2Fe-2S]-[ferredoxin] + S-adenosyl-L-homocysteine. Functionally, specifically methylates position 2 of adenine 2503 in 23S rRNA and position 2 of adenine 37 in tRNAs. m2A2503 modification seems to play a crucial role in the proofreading step occurring at the peptidyl transferase center and thus would serve to optimize ribosomal fidelity. This is Dual-specificity RNA methyltransferase RlmN from Hahella chejuensis (strain KCTC 2396).